We begin with the raw amino-acid sequence, 449 residues long: UDP-N-acetylmuramoylalanine--D-glutamate ligase (449 aa).

119–125 is an ATP binding site; it reads GTNGKTT.

The protein belongs to the MurCDEF family.

It is found in the cytoplasm. The catalysed reaction is UDP-N-acetyl-alpha-D-muramoyl-L-alanine + D-glutamate + ATP = UDP-N-acetyl-alpha-D-muramoyl-L-alanyl-D-glutamate + ADP + phosphate + H(+). The protein operates within cell wall biogenesis; peptidoglycan biosynthesis. In terms of biological role, cell wall formation. Catalyzes the addition of glutamate to the nucleotide precursor UDP-N-acetylmuramoyl-L-alanine (UMA). The sequence is that of UDP-N-acetylmuramoylalanine--D-glutamate ligase from Lactococcus lactis subsp. cremoris (strain MG1363).